Consider the following 427-residue polypeptide: Imidazolonepropionase (427 aa).

Fe(3+)-binding residues include H81 and H83. Zn(2+)-binding residues include H81 and H83. Residues R90, Y153, and H186 each coordinate 4-imidazolone-5-propanoate. Y153 is an N-formimidoyl-L-glutamate binding site. H260 is a Fe(3+) binding site. H260 is a Zn(2+) binding site. E263 contacts 4-imidazolone-5-propanoate. Fe(3+) is bound at residue D335. D335 contributes to the Zn(2+) binding site. Residues N337 and G339 each contribute to the N-formimidoyl-L-glutamate site. Residue S340 coordinates 4-imidazolone-5-propanoate.

It belongs to the metallo-dependent hydrolases superfamily. HutI family. The cofactor is Zn(2+). It depends on Fe(3+) as a cofactor.

The protein resides in the cytoplasm. It carries out the reaction 4-imidazolone-5-propanoate + H2O = N-formimidoyl-L-glutamate. It functions in the pathway amino-acid degradation; L-histidine degradation into L-glutamate; N-formimidoyl-L-glutamate from L-histidine: step 3/3. Functionally, catalyzes the hydrolytic cleavage of the carbon-nitrogen bond in imidazolone-5-propanoate to yield N-formimidoyl-L-glutamate. It is the third step in the universal histidine degradation pathway. The polypeptide is Imidazolonepropionase (Chloroflexus aggregans (strain MD-66 / DSM 9485)).